A 78-amino-acid polypeptide reads, in one-letter code: Small ribosomal subunit protein bS18 (78 aa).

This sequence belongs to the bacterial ribosomal protein bS18 family. Part of the 30S ribosomal subunit. Forms a tight heterodimer with protein bS6.

Binds as a heterodimer with protein bS6 to the central domain of the 16S rRNA, where it helps stabilize the platform of the 30S subunit. This is Small ribosomal subunit protein bS18 from Clostridium novyi (strain NT).